The chain runs to 276 residues: Putative pyruvate, phosphate dikinase regulatory protein 1 (276 aa).

Position 150 to 157 (glycine 150 to threonine 157) interacts with ADP.

Belongs to the pyruvate, phosphate/water dikinase regulatory protein family. PDRP subfamily.

The enzyme catalyses N(tele)-phospho-L-histidyl/L-threonyl-[pyruvate, phosphate dikinase] + ADP = N(tele)-phospho-L-histidyl/O-phospho-L-threonyl-[pyruvate, phosphate dikinase] + AMP + H(+). The catalysed reaction is N(tele)-phospho-L-histidyl/O-phospho-L-threonyl-[pyruvate, phosphate dikinase] + phosphate + H(+) = N(tele)-phospho-L-histidyl/L-threonyl-[pyruvate, phosphate dikinase] + diphosphate. Functionally, bifunctional serine/threonine kinase and phosphorylase involved in the regulation of the pyruvate, phosphate dikinase (PPDK) by catalyzing its phosphorylation/dephosphorylation. The sequence is that of Putative pyruvate, phosphate dikinase regulatory protein 1 from Syntrophomonas wolfei subsp. wolfei (strain DSM 2245B / Goettingen).